The primary structure comprises 1245 residues: MATLQFVLGSASFDHQQVMLDRLAAQYQQAPNDTYLYLVPNHVKFTTEVAVLKGLKKRLKQTGNYAQANVAVLSFSRLGWFLCKDDPDYQKPRLSNVGMAMVVAKIIRELKAESPDLLKMFRGESERQGFATEVTKQLVELQNANIQPADLAPDQETGIIKRALASQAGGGRASQSTVFTDKMTVLYEIYRRFEAAVTTHVTAPDRSAMLLNHLEAADLSTTHVYLDRFAGEFSAQEQLIVDALIQRAADTTVSLILDRDYRGRELPSQNNLYYRSAKQYQDLLNLATQQVGVDVLDPIVLNQPNQRRVSDALVGVEEWMEADARFALPDRLPAPTDQVGFFTAPTRVAELNRVATKIRQLVATGQYRYRDFLVVTRHLDGYQTMLEPIFSRHQIPVFNDNQRPMATSPLATFTAALFKVLKDYYQEADVMELLKTGLLVPETPEELQQEGRAKRNPNTFMTAVYRTENYCLKFGKGGRSWFDERPWRLEGEQPESDALKRQNAQINWVKNYIKDELAPALADLQTATTGRELATKFYQFLLDQGVRHQLYSWAHQAQESGQLTQLRDVQQIWQTFGTLLDEYVTILGDQVAPTEQPGQLVAEFADLMNAGFNAGRYAQIPSTLDQVLVSESGMIQDNQRKVLFIMGATDDVMPEVKASEGLLSDPDRELLKRGLNDDQFLPISGTDQINNEPFLNYLSMLSVTERLYMSAPLMSSDDSELTLSPYLKGLARHFNQWDDQNNAPTTDLPDRPNPRASEDDVWSFVAAPAVTMGNLIEVERLSKDTGRKLTSAWRDVARALTRYDEGLTGRLNDIRDGQYAKNEAVPLQPELAARLYTTNRQGQVTNQLTASISQLEKFYQNPYDYFLRYGLHLKKRDELEVSSDKSGTLNHDALAFFVQSVIDEPDLQLADLVKEEHQGRQAELIDQAFEQAMNQQEELRELAANNSRVNLQLQVAKQLITTMAKTLCLQATQTDAQPVAVEKAFGQADWTGESQAAELPALTFDLTGAGLGEGAKVSLRGRIDRLDELKLGEQTYQLVVDYKSYNKAFDLVDAYAGQALQMLAYLNALQAANPGKQLLGSLYLRLYVPTVDAGKEGTAEELKEHLYQGITINDDAVLAALDHGLGEKGATLLSIKKKSKKDTSRFKVSADDQFSAKAGSNLVSPTDLKRLMDHNAELIKEAAVQILQGQNEIRPYRRQVGTTAETGLAFSDFLDVSRFDQALDDYKEIELTDADVEAKFEQEEE.

The disordered stretch occupies residues 737–758 (WDDQNNAPTTDLPDRPNPRASE). A compositionally biased stretch (basic and acidic residues) spans 748 to 758 (LPDRPNPRASE).

Belongs to the helicase family. AddB/RexB type 2 subfamily. As to quaternary structure, heterodimer of AddA and RexB. The cofactor is Mg(2+).

Functionally, the heterodimer acts as both an ATP-dependent DNA helicase and an ATP-dependent, dual-direction single-stranded exonuclease. Recognizes the chi site generating a DNA molecule suitable for the initiation of homologous recombination. This subunit has 5' -&gt; 3' nuclease activity but not helicase activity. The sequence is that of ATP-dependent helicase/deoxyribonuclease subunit B from Limosilactobacillus fermentum (strain NBRC 3956 / LMG 18251) (Lactobacillus fermentum).